The sequence spans 421 residues: Peroxisomal succinyl-coenzyme A thioesterase (421 aa).

Residue serine 232 is the Charge relay system of the active site. Lysine 313 is modified (N6-succinyllysine). Catalysis depends on charge relay system residues aspartate 326 and histidine 360. A Microbody targeting signal motif is present at residues 419–421 (CRL).

The protein belongs to the C/M/P thioester hydrolase family. In terms of tissue distribution, mainly expressed in liver and kidney. Weakly expressed in other tissues including intestine, adrenal gland and adipose tissues.

Its subcellular location is the peroxisome. It catalyses the reaction succinyl-CoA + H2O = succinate + CoA + H(+). The catalysed reaction is glutaryl-CoA + H2O = glutarate + CoA + H(+). It functions in the pathway lipid metabolism; fatty acid metabolism. Functionally, catalyzes the hydrolysis of acyl-CoAs into free fatty acids and coenzyme A (CoASH), regulating their respective intracellular levels. In contrast to its human ortholog, functions essentially as a succinyl-CoA thioesterase with no activity with medium to long chain saturated acyl-CoAs and with a low activity toward glutaryl-CoA. This is Peroxisomal succinyl-coenzyme A thioesterase (Acot4) from Mus musculus (Mouse).